Here is an 823-residue protein sequence, read N- to C-terminus: DNA ligase (823 aa).

Residues 31–35 (DDAFD) and 73–74 (SQ) contribute to the NAD(+) site. The N6-AMP-lysine intermediate role is filled by Lys-100. Arg-121, Glu-163, Lys-275, and Lys-296 together coordinate NAD(+). Zn(2+) contacts are provided by Cys-387, Cys-390, Cys-403, and Cys-408. BRCT domains lie at 562 to 655 (QAES…TGET), 654 to 742 (ETVH…DAHV), and 741 to 823 (HVHA…TPGT).

Belongs to the NAD-dependent DNA ligase family. LigA subfamily. Requires Mg(2+) as cofactor. Mn(2+) serves as cofactor.

The catalysed reaction is NAD(+) + (deoxyribonucleotide)n-3'-hydroxyl + 5'-phospho-(deoxyribonucleotide)m = (deoxyribonucleotide)n+m + AMP + beta-nicotinamide D-nucleotide.. Functionally, DNA ligase that catalyzes the formation of phosphodiester linkages between 5'-phosphoryl and 3'-hydroxyl groups in double-stranded DNA using NAD as a coenzyme and as the energy source for the reaction. It is essential for DNA replication and repair of damaged DNA. The polypeptide is DNA ligase (Treponema pallidum (strain Nichols)).